Consider the following 162-residue polypeptide: Endoribonuclease YbeY (162 aa).

Positions 118, 122, and 128 each coordinate Zn(2+).

The protein belongs to the endoribonuclease YbeY family. The cofactor is Zn(2+).

It is found in the cytoplasm. Functionally, single strand-specific metallo-endoribonuclease involved in late-stage 70S ribosome quality control and in maturation of the 3' terminus of the 16S rRNA. In Glaesserella parasuis serovar 5 (strain SH0165) (Haemophilus parasuis), this protein is Endoribonuclease YbeY.